Reading from the N-terminus, the 1040-residue chain is Multidrug resistance protein MdtB (1040 aa).

A run of 12 helical transmembrane segments spans residues Phe16–Ile36, Leu347–Ala367, Ile369–Leu389, Leu396–Ile416, Ile440–Phe460, Phe472–Pro492, Trp537–Ile557, Leu863–Ile883, Phe888–Ala908, Ile911–Val931, Ile968–Val988, and Ile998–Ile1018.

It belongs to the resistance-nodulation-cell division (RND) (TC 2.A.6) family. MdtB subfamily. As to quaternary structure, part of a tripartite efflux system composed of MdtA, MdtB and MdtC. MdtB forms a heteromultimer with MdtC.

The protein resides in the cell inner membrane. Functionally, the MdtABC tripartite complex confers resistance against novobiocin and deoxycholate. The protein is Multidrug resistance protein MdtB of Escherichia coli O139:H28 (strain E24377A / ETEC).